Here is a 377-residue protein sequence, read N- to C-terminus: MGAAVTLNRIKIAPGIADIRDKYMELGFNYPEYNRAVKFAEESYTYYYETSPGEIKPKFCLIDGMSIDHCSSFIVPEFAKQYVLIHGEPCSSFKFRPGSLIYYQNEVTPEYIKDLKHATDYIASGQRCHFIKKDYLLGDSDSVAKCCSKTNTKHCPKIFNNNYKTEHCDDFMTGFCRNDPGNPNCLEWLRAKRKPAMSTYSDICSKHMDARYCSEFIRIIRPDYFTFGDTALYVFCNDHKGNRNCWCANYPKSNSGDKYLGPRVCWLHECTDESRDRKWLYYNQDVQRTRCKYVGCTINVNSLALKNSQAELTSNCTRTTSAVGDVHPGEPVVKDKIKLPTWLGAAITLVVISVIFYFISIYSRPKIKTNDINVRRR.

Residue G2 is the site of N-myristoyl glycine; by host attachment. Over 2–342 the chain is Virion surface; the sequence is GAAVTLNRIK…VKDKIKLPTW (341 aa). Residues 343–363 form a helical; Signal-anchor for type II membrane protein membrane-spanning segment; sequence LGAAITLVVISVIFYFISIYS. Residues 364–377 lie on the Intravirion side of the membrane; that stretch reads RPKIKTNDINVRRR.

The protein belongs to the orthopoxvirus OPG143 family. In terms of assembly, part of a stable entry-fusion complex (EFC) which is at least composed of proteins OPG143, OPG147, OPG155, OPG086, OPG094, OPG107, OPG104, and OPG099. Formation of the viral membrane is necessary for the assembly of the complex. Interacts with OPG094. Interacts with OPG153. Most cysteines are linked by disulfide bonds. They are created by the viral disulfide bond formation pathway, a poxvirus-specific redox pathway that operates on the cytoplasmic side of the MV membranes.

The protein resides in the virion membrane. Functionally, envelope protein part of the entry-fusion complex responsible for the virus membrane fusion with host cell membrane during virus entry. Also plays a role in cell-cell fusion (syncytium formation). The polypeptide is Virion membrane protein OPG143 (OPG143) (Vaccinia virus (strain Western Reserve) (VACV)).